The following is a 413-amino-acid chain: MVYLQKQDKEVFDAIKLELGRQRANIELIASENFVSEQVMEAMGSVLTNKYAEGYPGKRYYGGCEFVDIVEDLARDRAKKLFGAEYANVQPHSGAQANMAVYHTVLEPGDTVLGMNLSHGGHLTHGSPVNFSGVLYNFVEYGVREDTKEIDYDIVREAALKHKPKMIVAGASAYPRKIDFAKFREIADEVGAYLMVDMAHIAGLVAAGLHQNPVPYADFTTTTTHKTLRGPRGGMILAKAEWEQKLNKSIFPGIQGGPLMHVIAAKAVAFGEALQPEFTAYCEQIIRNSKKLAETLQANDVAVLTGGSDNHLLLIDLKPLGLTGKAAEKVLDEVGITVNKNTIPFETESPFVTSGIRVGVAAVTTRGFDEVAIEKVGVLISEVLHNLENEEVLADVKARVATLTNEYPLYPSL.

Residues leucine 117 and 121–123 (GHL) each bind (6S)-5,6,7,8-tetrahydrofolate. Residue lysine 226 is modified to N6-(pyridoxal phosphate)lysine. Position 349–351 (349–351 (SPF)) interacts with (6S)-5,6,7,8-tetrahydrofolate.

The protein belongs to the SHMT family. In terms of assembly, homodimer. The cofactor is pyridoxal 5'-phosphate.

Its subcellular location is the cytoplasm. It carries out the reaction (6R)-5,10-methylene-5,6,7,8-tetrahydrofolate + glycine + H2O = (6S)-5,6,7,8-tetrahydrofolate + L-serine. It participates in one-carbon metabolism; tetrahydrofolate interconversion. Its pathway is amino-acid biosynthesis; glycine biosynthesis; glycine from L-serine: step 1/1. Functionally, catalyzes the reversible interconversion of serine and glycine with tetrahydrofolate (THF) serving as the one-carbon carrier. This reaction serves as the major source of one-carbon groups required for the biosynthesis of purines, thymidylate, methionine, and other important biomolecules. Also exhibits THF-independent aldolase activity toward beta-hydroxyamino acids, producing glycine and aldehydes, via a retro-aldol mechanism. This is Serine hydroxymethyltransferase from Listeria monocytogenes serotype 4b (strain F2365).